A 485-amino-acid polypeptide reads, in one-letter code: Glutamyl-tRNA(Gln) amidotransferase subunit A (485 aa).

Catalysis depends on charge relay system residues lysine 78 and serine 153. Catalysis depends on serine 177, which acts as the Acyl-ester intermediate.

The protein belongs to the amidase family. GatA subfamily. Heterotrimer of A, B and C subunits.

It catalyses the reaction L-glutamyl-tRNA(Gln) + L-glutamine + ATP + H2O = L-glutaminyl-tRNA(Gln) + L-glutamate + ADP + phosphate + H(+). Functionally, allows the formation of correctly charged Gln-tRNA(Gln) through the transamidation of misacylated Glu-tRNA(Gln) in organisms which lack glutaminyl-tRNA synthetase. The reaction takes place in the presence of glutamine and ATP through an activated gamma-phospho-Glu-tRNA(Gln). In Bacillus cereus (strain 03BB102), this protein is Glutamyl-tRNA(Gln) amidotransferase subunit A.